Consider the following 380-residue polypeptide: DNA replication and repair protein RecF (380 aa).

Residue glycine 30 to threonine 37 participates in ATP binding.

This sequence belongs to the RecF family.

Its subcellular location is the cytoplasm. The RecF protein is involved in DNA metabolism; it is required for DNA replication and normal SOS inducibility. RecF binds preferentially to single-stranded, linear DNA. It also seems to bind ATP. This is DNA replication and repair protein RecF from Mycobacterium sp. (strain KMS).